Reading from the N-terminus, the 251-residue chain is Pyrroloquinoline-quinone synthase (251 aa).

It belongs to the PqqC family.

It catalyses the reaction 6-(2-amino-2-carboxyethyl)-7,8-dioxo-1,2,3,4,7,8-hexahydroquinoline-2,4-dicarboxylate + 3 O2 = pyrroloquinoline quinone + 2 H2O2 + 2 H2O + H(+). The protein operates within cofactor biosynthesis; pyrroloquinoline quinone biosynthesis. In terms of biological role, ring cyclization and eight-electron oxidation of 3a-(2-amino-2-carboxyethyl)-4,5-dioxo-4,5,6,7,8,9-hexahydroquinoline-7,9-dicarboxylic-acid to PQQ. This Pseudomonas putida (strain ATCC 47054 / DSM 6125 / CFBP 8728 / NCIMB 11950 / KT2440) protein is Pyrroloquinoline-quinone synthase.